Reading from the N-terminus, the 38-residue chain is Photosystem II reaction center protein L (38 aa).

The chain crosses the membrane as a helical span at residues 17 to 37 (SLFWGLLLIFVLAVLFSSYFF).

Belongs to the PsbL family. PSII is composed of 1 copy each of membrane proteins PsbA, PsbB, PsbC, PsbD, PsbE, PsbF, PsbH, PsbI, PsbJ, PsbK, PsbL, PsbM, PsbT, PsbX, PsbY, PsbZ, Psb30/Ycf12, at least 3 peripheral proteins of the oxygen-evolving complex and a large number of cofactors. It forms dimeric complexes.

It localises to the plastid. It is found in the chloroplast thylakoid membrane. Its function is as follows. One of the components of the core complex of photosystem II (PSII). PSII is a light-driven water:plastoquinone oxidoreductase that uses light energy to abstract electrons from H(2)O, generating O(2) and a proton gradient subsequently used for ATP formation. It consists of a core antenna complex that captures photons, and an electron transfer chain that converts photonic excitation into a charge separation. This subunit is found at the monomer-monomer interface and is required for correct PSII assembly and/or dimerization. In Rhodomonas salina (Cryptomonas salina), this protein is Photosystem II reaction center protein L.